Here is a 650-residue protein sequence, read N- to C-terminus: Alpha-agglutinin (650 aa).

The signal sequence occupies residues 1-19 (MFTFLKIILWLFSLALASA). Residues Asn-79, Asn-109, Asn-135, and Asn-248 are each glycosylated (N-linked (GlcNAc...) asparagine). An intrachain disulfide couples Cys-97 to Cys-114. Cys-202 and Cys-300 form a disulfide bridge. Residues 216-322 (YDSSNNNVDL…FSTTREFIVY (107 aa)) are ig-like fold domain important for alpha-agglutinin activity, contributing to a functional binding site for a-agglutinin. The O-linked (Man...) serine glycan is linked to Ser-282. 3 O-linked (Man...) threonine glycosylation sites follow: Thr-289, Thr-299, and Thr-303. Asn-306 is a glycosylation site (N-linked (GlcNAc...) asparagine). 3 O-linked (Man...) threonine glycosylation sites follow: Thr-307, Thr-308, and Thr-311. Ser-314 carries O-linked (Man...) serine glycosylation. Thr-315, Thr-316, and Thr-329 each carry an O-linked (Man...) threonine glycan. Ser-331, Ser-334, Ser-335, and Ser-338 each carry an O-linked (Man...) serine glycan. Thr-339, Thr-340, Thr-341, Thr-342, and Thr-345 each carry an O-linked (Man...) threonine glycan. 2 repeat units span residues 339-378 (TTTTDLTSINTSAYSTGSISTVETGNRTTSEVISHVVTTS) and 384-423 (TATTSLTIAQTSIYSTDSNITVGTDIHTTSEVISDVETIS). The 2 X 40 AA tandem repeats stretch occupies residues 339–423 (TTTTDLTSIN…EVISDVETIS (85 aa)). An O-linked (Man...) serine glycan is attached at Ser-346. Thr-349 carries O-linked (Man...) threonine glycosylation. A glycan (O-linked (Man...) serine) is linked at Ser-350. N-linked (GlcNAc...) asparagine glycans are attached at residues Asn-364, Asn-402, Asn-485, Asn-501, and Asn-614. Gly-627 carries GPI-anchor amidated glycine lipidation. The propeptide at 628–650 (KASIFFSAELGSIIFLLLSYLLF) is removed in mature form.

The protein to C.albicans ALS1. Interacts with AGA2. Post-translationally, N-glycosylated, and O-glycosylated by both PMT1 and PMT2. The GPI-anchor is attached to the protein in the endoplasmic reticulum and serves to target the protein to the cell surface. There, the glucosamine-inositol phospholipid moiety is cleaved off and the GPI-modified mannoprotein is covalently attached via its lipidless GPI glycan remnant to the 1,6-beta-glucan of the outer cell wall layer.

Its subcellular location is the secreted. The protein resides in the cell wall. It localises to the membrane. Cell surface glycoprotein promoting cell-cell contact to facilitate mating. S.cerevisiae A and alpha cells express the complementary cell surface glycoproteins A-agglutinin and alpha-, respectively, which interact with one another to promote cellular aggregation during mating. The polypeptide is Alpha-agglutinin (SAG1) (Saccharomyces cerevisiae (strain ATCC 204508 / S288c) (Baker's yeast)).